The sequence spans 595 residues: MDSVSSSSFLSSTFSLHHSLLRRRSSSPTLLRINSAVVEERSPITNPSDNNDRRNKPKTLHNRTNHTLVSSPPKLRPEMTLATALFTTVEDVINTFIDPPSRPSVDPKHVLSDNFAPVLDELPPTDCEIIHGTLPLSLNGAYIRNGPNPQFLPRGPYHLFDGDGMLHAIKIHNGKATLCSRYVKTYKYNVEKQTGAPVMPNVFSGFNGVTASVARGALTAARVLTGQYNPVNGIGLANTSLAFFSNRLFALGESDLPYAVRLTESGDIETIGRYDFDGKLAMSMTAHPKTDPITGETFAFRYGPVPPFLTYFRFDSAGKKQRDVPIFSMTSPSFLHDFAITKRHAIFAEIQLGMRMNMLDLVLEGGSPVGTDNGKTPRLGVIPKYAGDESEMKWFEVPGFNIIHAINAWDEDDGNSVVLIAPNIMSIEHTLERMDLVHALVEKVKIDLVTGIVRRHPISARNLDFAVINPAFLGRCSRYVYAAIGDPMPKISGVVKLDVSKGDRDDCTVARRMYGSGCYGGEPFFVARDPGNPEAEEDDGYVVTYVHDEVTGESKFLVMDAKSPELEIVAAVRLPRRVPYGFHGLFVKESDLNKL.

The transit peptide at M1–N34 directs the protein to the chloroplast. The disordered stretch occupies residues R41–K74. Over residues N55–T64 the composition is skewed to basic residues. Fe cation contacts are provided by H287, H336, H404, and H583.

This sequence belongs to the carotenoid oxygenase family. In terms of assembly, interacts with VAR3. Interacts with PGM48. Fe(2+) serves as cofactor. As to expression, mostly expressed in flowers (e.g. sepals and petals), siliques, seeds, leaves and cotyledons.

The protein localises to the plastid. The protein resides in the chloroplast. Its subcellular location is the plastoglobule. Its function is as follows. May be involved in carotenoid cleavage. This chain is Probable carotenoid cleavage dioxygenase 4, chloroplastic (CCD4), found in Arabidopsis thaliana (Mouse-ear cress).